Here is a 116-residue protein sequence, read N- to C-terminus: Nitrogen regulatory PII-like protein (116 aa).

This sequence belongs to the P(II) protein family. Needs to interact with NrgA in order to localize correctly to the membrane.

The protein localises to the cell membrane. In terms of biological role, required for full induction of the nrgAB operon under conditions of ammonium limitation. The sequence is that of Nitrogen regulatory PII-like protein (nrgB) from Bacillus subtilis (strain 168).